The chain runs to 217 residues: Small ribosomal subunit protein uS3 (217 aa).

Residues 38–106 (IRKYIEQRLA…RVHINIIEIK (69 aa)) form the KH type-2 domain.

Belongs to the universal ribosomal protein uS3 family. Part of the 30S ribosomal subunit. Forms a tight complex with proteins S10 and S14.

Its function is as follows. Binds the lower part of the 30S subunit head. Binds mRNA in the 70S ribosome, positioning it for translation. This is Small ribosomal subunit protein uS3 from Lactiplantibacillus plantarum (strain ATCC BAA-793 / NCIMB 8826 / WCFS1) (Lactobacillus plantarum).